Reading from the N-terminus, the 414-residue chain is Glycogen synthase (414 aa).

The protein belongs to the glycosyltransferase group 1 family.

The enzyme catalyses [(1-&gt;4)-alpha-D-glucosyl](n) + UDP-alpha-D-glucose = [(1-&gt;4)-alpha-D-glucosyl](n+1) + UDP + H(+). The protein operates within glycan biosynthesis; glycogen biosynthesis. In terms of biological role, glucosyltransferase that uses UDP-glucose as the sugar donor to elongate alpha-(1-&gt;4)-glucans. Is involved in the biosynthesis of both 6-O-methylglucosyl lipopolysaccharides (MGLP) and glycogen. May also use ADP-glucose as substrate. The polypeptide is Glycogen synthase (Mycobacterium tuberculosis (strain CDC 1551 / Oshkosh)).